The sequence spans 65 residues: DNA-directed RNA polymerase subunit Rpo10 (65 aa).

Zn(2+) is bound by residues C7, C10, C44, and C45.

The protein belongs to the archaeal Rpo10/eukaryotic RPB10 RNA polymerase subunit family. Part of the RNA polymerase complex. Requires Zn(2+) as cofactor.

It is found in the cytoplasm. It carries out the reaction RNA(n) + a ribonucleoside 5'-triphosphate = RNA(n+1) + diphosphate. DNA-dependent RNA polymerase (RNAP) catalyzes the transcription of DNA into RNA using the four ribonucleoside triphosphates as substrates. This is DNA-directed RNA polymerase subunit Rpo10 from Pyrococcus furiosus (strain ATCC 43587 / DSM 3638 / JCM 8422 / Vc1).